Reading from the N-terminus, the 852-residue chain is Glutamine--tRNA ligase (852 aa).

Positions 1-42 are disordered; that stretch reads MGAFGWEQDRGAPFSGRSPRILTRMTDAPRPTAGADAPARPP. Residues 1–635 form a glutaminyl-tRNA synthetase region; it reads MGAFGWEQDR…ITLKDTWGKQ (635 aa). Positions 28–38 are enriched in low complexity; sequence APRPTAGADAP. The 'HIGH' region motif lies at 74 to 84; that stretch reads PDPSGYAHLGH. The L-glutamine site is built by aspartate 107 and tyrosine 252. The 'KMSKS' region motif lies at 308 to 312; it reads ITSKR. Disordered stretches follow at residues 533-562 and 632-681; these read EGEN…TAPV and WGKQ…LTPE. The tract at residues 636–852 is gatB-like; sequence GGGTQQKAEG…LAAALKDALA (217 aa). Residues 664-675 are compositionally biased toward low complexity; it reads SSSPAKAHAPKA.

The protein in the N-terminal section; belongs to the class-I aminoacyl-tRNA synthetase family. It in the C-terminal section; belongs to the GatB/GatE family. Monomer.

It is found in the cytoplasm. The catalysed reaction is tRNA(Gln) + L-glutamine + ATP = L-glutaminyl-tRNA(Gln) + AMP + diphosphate. In Deinococcus radiodurans (strain ATCC 13939 / DSM 20539 / JCM 16871 / CCUG 27074 / LMG 4051 / NBRC 15346 / NCIMB 9279 / VKM B-1422 / R1), this protein is Glutamine--tRNA ligase.